We begin with the raw amino-acid sequence, 189 residues long: MFKGIVQGVGIIKKISKNDDTQRHGITFPKDILDSVEKDTVMLVNGCSVTVVRITGDVVYFDIDQAINTTTFRKLEVGNKVNLEVRPGFGSLLGKGALTGNIKGVATVDNITEEEDLLKVYIKIPKDLIENISSEDHIGINGVSNSIEEVSNDIICINYPKNLSITTNLGTLETGSEVNVETLNVSNEW.

Lumazine-binding repeat units follow at residues 1–96 and 97–189; these read MFKG…LGKG and ALTG…SNEW.

The cofactor is 6,7-dimethyl-8-(1-D-ribityl)lumazine.

Its function is as follows. Antenna protein that modulates the color of the bioluminescence emission of the luciferase. In the presence of LumP, luciferase emission is shifted to higher energy values (shorter wavelength). This chain is Lumazine protein (luxL), found in Photobacterium phosphoreum.